A 352-amino-acid chain; its full sequence is Small ribosomal subunit biogenesis GTPase RsgA (352 aa).

The CP-type G domain maps to 109–277 (DTVLKRPDMY…LIDSPGIREF (169 aa)). GTP is bound by residues 165-168 (NKAD) and 219-227 (GQSGVGKSS). Residues Cys-301, Cys-306, His-308, and Cys-314 each coordinate Zn(2+).

The protein belongs to the TRAFAC class YlqF/YawG GTPase family. RsgA subfamily. Monomer. Associates with 30S ribosomal subunit, binds 16S rRNA. Zn(2+) is required as a cofactor.

It localises to the cytoplasm. Functionally, one of several proteins that assist in the late maturation steps of the functional core of the 30S ribosomal subunit. Helps release RbfA from mature subunits. May play a role in the assembly of ribosomal proteins into the subunit. Circularly permuted GTPase that catalyzes slow GTP hydrolysis, GTPase activity is stimulated by the 30S ribosomal subunit. The sequence is that of Small ribosomal subunit biogenesis GTPase RsgA from Alcanivorax borkumensis (strain ATCC 700651 / DSM 11573 / NCIMB 13689 / SK2).